The primary structure comprises 718 residues: Catalase-peroxidase (718 aa).

The tryptophyl-tyrosyl-methioninium (Trp-Tyr) (with M-246) cross-link spans 92–220 (WHAAGTYRTA…LASVMMGLIY (129 aa)). Residue histidine 93 is the Proton acceptor of the active site. Residues 220–246 (YVNPEGVDGHPDPLKTANDVRVTFERM) constitute a cross-link (tryptophyl-tyrosyl-methioninium (Tyr-Met) (with W-92)). Histidine 261 is a heme b binding site.

This sequence belongs to the peroxidase family. Peroxidase/catalase subfamily. As to quaternary structure, homodimer or homotetramer. Requires heme b as cofactor. Formation of the three residue Trp-Tyr-Met cross-link is important for the catalase, but not the peroxidase activity of the enzyme.

It catalyses the reaction H2O2 + AH2 = A + 2 H2O. The enzyme catalyses 2 H2O2 = O2 + 2 H2O. In terms of biological role, bifunctional enzyme with both catalase and broad-spectrum peroxidase activity. The sequence is that of Catalase-peroxidase from Shewanella halifaxensis (strain HAW-EB4).